The primary structure comprises 98 residues: NADH-ubiquinone oxidoreductase chain 4L (98 aa).

Helical transmembrane passes span 1 to 21 (MTPVHFSFSSAFILGLMGLAF), 29 to 49 (ALLCLEGMMLSLFIALALWAL), and 59 to 79 (APMLLLAFSACEASTGLALLV).

Belongs to the complex I subunit 4L family.

The protein localises to the mitochondrion membrane. It catalyses the reaction a ubiquinone + NADH + 5 H(+)(in) = a ubiquinol + NAD(+) + 4 H(+)(out). Core subunit of the mitochondrial membrane respiratory chain NADH dehydrogenase (Complex I) which catalyzes electron transfer from NADH through the respiratory chain, using ubiquinone as an electron acceptor. Part of the enzyme membrane arm which is embedded in the lipid bilayer and involved in proton translocation. The sequence is that of NADH-ubiquinone oxidoreductase chain 4L (MT-ND4L) from Carassius auratus (Goldfish).